The chain runs to 263 residues: MFEIGINLTSSQFDKDRLQVVERARTAGLSGMLITGTSAQESVEAQKMADEHPDFCWSTAGVHPHQASHWNAQVEAGIRELAVLPNVVAIGECGLDFNRNFSPADRQEAAFTAQLALAKELQLPVFLHCRDAGERFATLLKPWLSDLPGGVVHCFTGTRQELELYLSLGLSIGITGWVCDERRGLELRDMLPLIPADRLMLETDAPYLLPRDMENKPKNRRNEPAFLPHIVKQVALWRGEDPQWLADITDDNARKLFALSARR.

The a divalent metal cation site is built by Glu92, His128, and His153.

Belongs to the metallo-dependent hydrolases superfamily. TatD-type hydrolase family. TatD subfamily. As to quaternary structure, monomer. Requires Mg(2+) as cofactor.

Its subcellular location is the cytoplasm. Functionally, 3'-5' exonuclease that prefers single-stranded DNA and RNA. May play a role in the H(2)O(2)-induced DNA damage repair. This chain is 3'-5' ssDNA/RNA exonuclease TatD, found in Rahnella sp. (strain Y9602).